An 83-amino-acid chain; its full sequence is Small ribosomal subunit protein bS16 (83 aa).

The protein belongs to the bacterial ribosomal protein bS16 family.

This chain is Small ribosomal subunit protein bS16, found in Pseudoalteromonas atlantica (strain T6c / ATCC BAA-1087).